The following is a 360-amino-acid chain: Chorismate synthase (360 aa).

Residue arginine 48 coordinates NADP(+). Residues 125–127 (RSS), 242–243 (NA), glycine 286, 301–305 (KPTSS), and arginine 327 contribute to the FMN site.

It belongs to the chorismate synthase family. Homotetramer. It depends on FMNH2 as a cofactor.

The enzyme catalyses 5-O-(1-carboxyvinyl)-3-phosphoshikimate = chorismate + phosphate. It participates in metabolic intermediate biosynthesis; chorismate biosynthesis; chorismate from D-erythrose 4-phosphate and phosphoenolpyruvate: step 7/7. Functionally, catalyzes the anti-1,4-elimination of the C-3 phosphate and the C-6 proR hydrogen from 5-enolpyruvylshikimate-3-phosphate (EPSP) to yield chorismate, which is the branch point compound that serves as the starting substrate for the three terminal pathways of aromatic amino acid biosynthesis. This reaction introduces a second double bond into the aromatic ring system. The protein is Chorismate synthase of Pelagibacter ubique (strain HTCC1062).